Here is an 809-residue protein sequence, read N- to C-terminus: Phenylalanine--tRNA ligase beta subunit (809 aa).

The tRNA-binding domain maps to 39–153 (APPFSQIVVG…EDTPVGADIR (115 aa)). The B5 domain occupies 404-479 (PKREPVRMRV…RIYGFEQIPA (76 aa)). Mg(2+) contacts are provided by D457, D463, E466, and E467. In terms of domain architecture, FDX-ACB spans 706–808 (PRVPAVTRDI…AGDAFGARLR (103 aa)).

The protein belongs to the phenylalanyl-tRNA synthetase beta subunit family. Type 1 subfamily. As to quaternary structure, tetramer of two alpha and two beta subunits. Mg(2+) is required as a cofactor.

The protein localises to the cytoplasm. It catalyses the reaction tRNA(Phe) + L-phenylalanine + ATP = L-phenylalanyl-tRNA(Phe) + AMP + diphosphate + H(+). The polypeptide is Phenylalanine--tRNA ligase beta subunit (Ralstonia nicotianae (strain ATCC BAA-1114 / GMI1000) (Ralstonia solanacearum)).